We begin with the raw amino-acid sequence, 295 residues long: Ethanolamine ammonia-lyase small subunit (295 aa).

Val-209 and Glu-230 together coordinate adenosylcob(III)alamin.

Belongs to the EutC family. As to quaternary structure, the basic unit is a heterodimer which dimerizes to form tetramers. The heterotetramers trimerize; 6 large subunits form a core ring with 6 small subunits projecting outwards. Adenosylcob(III)alamin serves as cofactor.

The protein resides in the bacterial microcompartment. The enzyme catalyses ethanolamine = acetaldehyde + NH4(+). Its pathway is amine and polyamine degradation; ethanolamine degradation. In terms of biological role, catalyzes the deamination of various vicinal amino-alcohols to oxo compounds. Allows this organism to utilize ethanolamine as the sole source of nitrogen and carbon in the presence of external vitamin B12. The sequence is that of Ethanolamine ammonia-lyase small subunit from Clostridium perfringens (strain ATCC 13124 / DSM 756 / JCM 1290 / NCIMB 6125 / NCTC 8237 / Type A).